A 159-amino-acid chain; its full sequence is MSIIPSFFGSRRSNVLNPFSLDIWDPFQDYPLITSSGTSSEFGKETAAFANTHIDWKETPQAHVFKADLPGLKKEEVKVEVEEGKVLQISGERNKEKEEKNNKWHRVEFSSGKFLRRFRLPENANVDEVKAGMENGVLTVTVPKVEMKKPEVKSIHISG.

A sHSP domain is found at 45 to 159; the sequence is ETAAFANTHI…PEVKSIHISG (115 aa).

The protein belongs to the small heat shock protein (HSP20) family. As to quaternary structure, forms oligomeric structures.

The protein resides in the cytoplasm. The chain is 18.0 kDa class I heat shock protein from Daucus carota (Wild carrot).